The sequence spans 400 residues: Diphosphomevalonate decarboxylase (400 aa).

Residues 25-28 (YWGK), arginine 80, 155-160 (SGSACR), and threonine 211 each bind (R)-5-diphosphomevalonate.

It belongs to the diphosphomevalonate decarboxylase family. In terms of assembly, homodimer.

Its subcellular location is the cytoplasm. It carries out the reaction (R)-5-diphosphomevalonate + ATP = isopentenyl diphosphate + ADP + phosphate + CO2. The protein operates within steroid biosynthesis; cholesterol biosynthesis. Its function is as follows. Catalyzes the ATP dependent decarboxylation of (R)-5-diphosphomevalonate to form isopentenyl diphosphate (IPP). Functions in the mevalonate (MVA) pathway leading to isopentenyl diphosphate (IPP), a key precursor for the biosynthesis of isoprenoids and sterol synthesis. The chain is Diphosphomevalonate decarboxylase (mvd) from Danio rerio (Zebrafish).